A 639-amino-acid polypeptide reads, in one-letter code: Altered inheritance of mitochondria protein 9, mitochondrial (639 aa).

The transit peptide at 1 to 45 (MLMSKAPKLGNLLSKNSIKIVSGSKLRCNLKYINVRYISDTPDKV) directs the protein to the mitochondrion. The tract at residues 619 to 639 (VSSEAQSEVQSEVQSSTENKD) is disordered.

It belongs to the AIM9 family.

It localises to the mitochondrion. The chain is Altered inheritance of mitochondria protein 9, mitochondrial (AIM9) from Vanderwaltozyma polyspora (strain ATCC 22028 / DSM 70294 / BCRC 21397 / CBS 2163 / NBRC 10782 / NRRL Y-8283 / UCD 57-17) (Kluyveromyces polysporus).